Consider the following 577-residue polypeptide: Arginine--tRNA ligase (577 aa).

The short motif at 122–132 is the 'HIGH' region element; it reads PNVAKEMHVGH.

It belongs to the class-I aminoacyl-tRNA synthetase family. Monomer.

The protein localises to the cytoplasm. The catalysed reaction is tRNA(Arg) + L-arginine + ATP = L-arginyl-tRNA(Arg) + AMP + diphosphate. The protein is Arginine--tRNA ligase of Escherichia coli O81 (strain ED1a).